The following is a 76-amino-acid chain: Small ribosomal subunit protein bS18 (76 aa).

It belongs to the bacterial ribosomal protein bS18 family. As to quaternary structure, part of the 30S ribosomal subunit. Forms a tight heterodimer with protein bS6.

Functionally, binds as a heterodimer with protein bS6 to the central domain of the 16S rRNA, where it helps stabilize the platform of the 30S subunit. The protein is Small ribosomal subunit protein bS18 of Petrotoga mobilis (strain DSM 10674 / SJ95).